We begin with the raw amino-acid sequence, 376 residues long: Erythronate-4-phosphate dehydrogenase (376 aa).

Substrate is bound by residues serine 45 and threonine 67. NAD(+) contacts are provided by residues aspartate 147, alanine 209–arginine 211, and aspartate 235. The active site involves arginine 211. Glutamate 240 is a catalytic residue. Histidine 257 acts as the Proton donor in catalysis. Glycine 260 is an NAD(+) binding site. Position 261 (tyrosine 261) interacts with substrate.

Belongs to the D-isomer specific 2-hydroxyacid dehydrogenase family. PdxB subfamily. As to quaternary structure, homodimer.

Its subcellular location is the cytoplasm. It catalyses the reaction 4-phospho-D-erythronate + NAD(+) = (R)-3-hydroxy-2-oxo-4-phosphooxybutanoate + NADH + H(+). It functions in the pathway cofactor biosynthesis; pyridoxine 5'-phosphate biosynthesis; pyridoxine 5'-phosphate from D-erythrose 4-phosphate: step 2/5. In terms of biological role, catalyzes the oxidation of erythronate-4-phosphate to 3-hydroxy-2-oxo-4-phosphonooxybutanoate. In Aeromonas hydrophila subsp. hydrophila (strain ATCC 7966 / DSM 30187 / BCRC 13018 / CCUG 14551 / JCM 1027 / KCTC 2358 / NCIMB 9240 / NCTC 8049), this protein is Erythronate-4-phosphate dehydrogenase.